Consider the following 178-residue polypeptide: Interleukin-10 (178 aa).

The N-terminal stretch at 1-18 (MHSSALLCCLVFLAGVAA) is a signal peptide. Cystine bridges form between Cys-30–Cys-126 and Cys-80–Cys-132. N-linked (GlcNAc...) asparagine glycosylation is present at Asn-134.

It belongs to the IL-10 family. In terms of assembly, homodimer. Interacts with IL10RA and IL10RB.

It localises to the secreted. Functionally, major immune regulatory cytokine that acts on many cells of the immune system where it has profound anti-inflammatory functions, limiting excessive tissue disruption caused by inflammation. Mechanistically, IL10 binds to its heterotetrameric receptor comprising IL10RA and IL10RB leading to JAK1 and STAT2-mediated phosphorylation of STAT3. In turn, STAT3 translocates to the nucleus where it drives expression of anti-inflammatory mediators. Targets antigen-presenting cells (APCs) such as macrophages and monocytes and inhibits their release of pro-inflammatory cytokines including granulocyte-macrophage colony-stimulating factor /GM-CSF, granulocyte colony-stimulating factor/G-CSF, IL-1 alpha, IL-1 beta, IL-6, IL-8 and TNF-alpha. Also interferes with antigen presentation by reducing the expression of MHC-class II and co-stimulatory molecules, thereby inhibiting their ability to induce T cell activation. In addition, controls the inflammatory response of macrophages by reprogramming essential metabolic pathways including mTOR signaling. This Bos taurus (Bovine) protein is Interleukin-10 (IL10).